Here is a 393-residue protein sequence, read N- to C-terminus: Glutamate 5-kinase (393 aa).

Lysine 17 serves as a coordination point for ATP. Residues serine 57, aspartate 144, and asparagine 156 each contribute to the substrate site. 176-177 (SD) is a binding site for ATP. A PUA domain is found at 282 to 359 (AGSIAIDAGA…AEIAAILGYA (78 aa)). Positions 374 to 393 (APSGARSEEGGNEKKGKLHA) are disordered. Residues 379 to 393 (RSEEGGNEKKGKLHA) are compositionally biased toward basic and acidic residues.

This sequence belongs to the glutamate 5-kinase family.

It is found in the cytoplasm. It carries out the reaction L-glutamate + ATP = L-glutamyl 5-phosphate + ADP. It functions in the pathway amino-acid biosynthesis; L-proline biosynthesis; L-glutamate 5-semialdehyde from L-glutamate: step 1/2. Functionally, catalyzes the transfer of a phosphate group to glutamate to form L-glutamate 5-phosphate. The protein is Glutamate 5-kinase of Sinorhizobium fredii (strain NBRC 101917 / NGR234).